The following is a 673-amino-acid chain: Translation factor GUF1 homolog, mitochondrial (673 aa).

One can recognise a tr-type G domain in the interval 68–260 (ERIRNFSIIA…AVIERIPSPP (193 aa)). GTP contacts are provided by residues 77-84 (AHVDHGKS), 153-157 (DTPGH), and 207-210 (NKID).

It belongs to the TRAFAC class translation factor GTPase superfamily. Classic translation factor GTPase family. LepA subfamily.

It is found in the mitochondrion inner membrane. It catalyses the reaction GTP + H2O = GDP + phosphate + H(+). Functionally, promotes mitochondrial protein synthesis. May act as a fidelity factor of the translation reaction, by catalyzing a one-codon backward translocation of tRNAs on improperly translocated ribosomes. Binds to mitochondrial ribosomes in a GTP-dependent manner. The polypeptide is Translation factor GUF1 homolog, mitochondrial (Ricinus communis (Castor bean)).